The following is a 401-amino-acid chain: MSVKIIVPSLGESVTEATIAKWYKKEGDPVKTDELLLEIETEKVTLEVNAPCDGTIGKISKTDGANVAVGEEIGEINEGAAANTAGTNNESAKAQAVTQPTSEKPVEKPAVVNNILAPSVQKLVTENKLDPNNIKGTGRDGRITKGDVLETINTPSAATSTPTVNKTNEERVQRVRMSRLRKTIAQRLKDSQNTAAILTTFNEIDMSKVIALRNQYKEEFEKKHLVKLGFMSFFVKATIEALKLIPSVNAEIDGDDLVYKNYYDIGVAVGTEQGLVVPVVRDADKMGFAEVEKAIGTLAKKAREGKLSMADLSGGTFSISNGGVYGSLLSTPIINPPQSGILGLHKTEERAVVIDGKIEIRPMMYIALSYDHRIIDGKEGVSFLVKIKELIENPEKLLLNL.

The region spanning Ser2–Asn77 is the Lipoyl-binding domain. At Lys43 the chain carries N6-lipoyllysine. Residues Ile115–Ile152 form the Peripheral subunit-binding (PSBD) domain. Active-site residues include His372 and Asp376.

Belongs to the 2-oxoacid dehydrogenase family. Forms a 24-polypeptide structural core with octahedral symmetry. Part of the 2-oxoglutarate dehydrogenase (OGDH) complex composed of E1 (2-oxoglutarate dehydrogenase), E2 (dihydrolipoamide succinyltransferase) and E3 (dihydrolipoamide dehydrogenase); the complex contains multiple copies of the three enzymatic components (E1, E2 and E3). (R)-lipoate serves as cofactor.

The enzyme catalyses N(6)-[(R)-dihydrolipoyl]-L-lysyl-[protein] + succinyl-CoA = N(6)-[(R)-S(8)-succinyldihydrolipoyl]-L-lysyl-[protein] + CoA. The protein operates within amino-acid degradation; L-lysine degradation via saccharopine pathway; glutaryl-CoA from L-lysine: step 6/6. Functionally, E2 component of the 2-oxoglutarate dehydrogenase (OGDH) complex which catalyzes the second step in the conversion of 2-oxoglutarate to succinyl-CoA and CO(2). This is Dihydrolipoyllysine-residue succinyltransferase component of 2-oxoglutarate dehydrogenase complex (sucB) from Rickettsia felis (strain ATCC VR-1525 / URRWXCal2) (Rickettsia azadi).